The sequence spans 130 residues: Small ribosomal subunit protein uS11c (130 aa).

Belongs to the universal ribosomal protein uS11 family. In terms of assembly, part of the 30S ribosomal subunit.

It is found in the plastid. Its subcellular location is the chloroplast. In Chlorokybus atmophyticus (Soil alga), this protein is Small ribosomal subunit protein uS11c.